Here is a 257-residue protein sequence, read N- to C-terminus: MVLIRVLANLLILQLSYAQKSSELVIGGDECNINEHRSLVVLFNSSGALCGGTLINQEWVLTAAHCDMPNMQIYLGVHSASVPNDDEQARDPEEKYFCLSSNNDTEWDKDIMLIRLNRSVRNSKHIAPLSLPSSPPSVGSVCRIMGWGAITSPNETYPDVPYCANIKLLRYSLCRVYQRMPAQSRILCAGILQGGKGICKGDSGGPLICNGQFQGIVHGGGKTCAQPYEPGLYIKVFDYTDWIQNIIAGNTTATCPP.

Residues 1-18 (MVLIRVLANLLILQLSYA) form the signal peptide. A propeptide spanning residues 19 to 24 (QKSSEL) is cleaved from the precursor. In terms of domain architecture, Peptidase S1 spans 25–248 (VIGGDECNIN…YTDWIQNIIA (224 aa)). 6 cysteine pairs are disulfide-bonded: Cys-31/Cys-163, Cys-50/Cys-66, Cys-98/Cys-255, Cys-142/Cys-209, Cys-174/Cys-188, and Cys-199/Cys-224. Asn-44 carries N-linked (GlcNAc...) asparagine glycosylation. Residue His-65 is the Charge relay system of the active site. The N-linked (GlcNAc...) asparagine glycan is linked to Asn-103. Asp-110 serves as the catalytic Charge relay system. N-linked (GlcNAc...) asparagine glycosylation is found at Asn-117 and Asn-154. The active-site Charge relay system is Ser-203. Asn-250 carries N-linked (GlcNAc...) asparagine glycosylation.

Belongs to the peptidase S1 family. Snake venom subfamily. Monomer. In terms of tissue distribution, expressed by the venom gland.

It localises to the secreted. In terms of biological role, snake venom serine protease that may act in the hemostasis system of the prey. In Protobothrops flavoviridis (Habu), this protein is Snake venom serine protease 3 (TLF3).